Reading from the N-terminus, the 20-residue chain is Cicerin (20 aa).

The segment at 1-20 (ARCENFADSYRQPPISSSQT) is disordered.

Has antifungal activity against B.cinerea, F.oxysporum and M.arachidicola. Inhibits cell-free translation in rabbit reticulocyte lysate system. This is Cicerin from Cicer arietinum (Chickpea).